The primary structure comprises 372 residues: Glutamate 5-kinase (372 aa).

ATP is bound at residue Lys14. Substrate-binding residues include Ser54, Asp141, and Asn153. Residue 173–174 (TD) participates in ATP binding. Residues 280 to 358 (RGTLVLDAGA…DAIESILGYS (79 aa)) form the PUA domain.

This sequence belongs to the glutamate 5-kinase family.

The protein localises to the cytoplasm. The enzyme catalyses L-glutamate + ATP = L-glutamyl 5-phosphate + ADP. It functions in the pathway amino-acid biosynthesis; L-proline biosynthesis; L-glutamate 5-semialdehyde from L-glutamate: step 1/2. Catalyzes the transfer of a phosphate group to glutamate to form L-glutamate 5-phosphate. This is Glutamate 5-kinase from Pseudomonas putida (strain GB-1).